The following is a 685-amino-acid chain: A-type ATP synthase subunit I (685 aa).

Helical transmembrane passes span 172–192, 348–368, 394–414, 464–484, 538–558, 604–624, and 626–646; these read VGGL…VAVP, EIVP…LMFP, VIAV…EVFG, LFMG…NGVI, LVLA…PIIY, MFVI…ADVV, and ALLY…LAFA.

This sequence belongs to the V-ATPase 116 kDa subunit family. Has multiple subunits with at least A(3), B(3), C, D, E, F, H, I and proteolipid K(x).

It localises to the cell membrane. Its function is as follows. Component of the A-type ATP synthase that produces ATP from ADP in the presence of a proton gradient across the membrane. The polypeptide is A-type ATP synthase subunit I (Aeropyrum pernix (strain ATCC 700893 / DSM 11879 / JCM 9820 / NBRC 100138 / K1)).